A 143-amino-acid polypeptide reads, in one-letter code: uncharacterized protein (143 aa).

One can recognise an HTH marR-type domain in the interval 5–137 (DARLASDLSL…LRNAADLILE (133 aa)). Positions 51-74 (PGALAIRERVRPPSMTRVIASLAD) form a DNA-binding region, H-T-H motif.

In terms of assembly, homodimer.

This is an uncharacterized protein from Mycobacterium leprae (strain TN).